Here is a 364-residue protein sequence, read N- to C-terminus: Histidinol-phosphate aminotransferase 2 (364 aa).

Lysine 223 is subject to N6-(pyridoxal phosphate)lysine.

Belongs to the class-II pyridoxal-phosphate-dependent aminotransferase family. Histidinol-phosphate aminotransferase subfamily. As to quaternary structure, homodimer. It depends on pyridoxal 5'-phosphate as a cofactor.

The catalysed reaction is L-histidinol phosphate + 2-oxoglutarate = 3-(imidazol-4-yl)-2-oxopropyl phosphate + L-glutamate. It functions in the pathway amino-acid biosynthesis; L-histidine biosynthesis; L-histidine from 5-phospho-alpha-D-ribose 1-diphosphate: step 7/9. This is Histidinol-phosphate aminotransferase 2 (hisC2) from Oceanobacillus iheyensis (strain DSM 14371 / CIP 107618 / JCM 11309 / KCTC 3954 / HTE831).